Here is a 555-residue protein sequence, read N- to C-terminus: Cytochrome P450 monooxygeanse terQ (555 aa).

Residues 10–30 form a helical membrane-spanning segment; it reads VPAHAWPTITVAGAVMVVVLL. Cys479 is a binding site for heme. Residues 535 to 555 are disordered; that stretch reads DAGNTARVDPGAPDGVASEPS.

It belongs to the cytochrome P450 family. Requires heme as cofactor.

Its subcellular location is the membrane. The protein operates within secondary metabolite biosynthesis. Functionally, cytochrome P450 monooxygeanse; part of the gene cluster that mediates the biosynthesis of terpendoles, indole-diterpene (IDT) mycotoxins including terpendole I, terpendole K, terpendole C, as well as the kinesin Eg5 inhibitor terpendole E. TerQ is a C11-hydroxylating enzyme that converts paspalline into terpendole E. Is also able to hydroxylate 13-desoxyterpendole I at C-13 to produce terpendole I. Terpendoles biosynthesis begins with the synthesis of geranylgeranyl diphosphate (GGPP) by a yet unidentified GGPP synthase. Condensation of indole-3-glycerol phosphate with GGPP by the prenyltransferase terC then forms 3-geranylgeranylindole (3-GGI), followed by epoxidation and cyclization of this intermediate (by the FAD-dependent monooxygeanse terM and the terpene cyclase terB) to form paspaline. The cytochrome monooxygenase terQ then hydroxylates paspalline at C-11 to yield terpendole E. The cytochrome monooxygenase terP converts terpendole E to 13-desoxyterpendole I, and terQ converts 13-desoxyterpendole I into terpendole I. TerF and terK are required for conversion of terpendole I to terpendole C which is further converted to terpendole K. The sequence is that of Cytochrome P450 monooxygeanse terQ from Tolypocladium album (Soil fungus).